The primary structure comprises 258 residues: 3-deoxy-manno-octulosonate cytidylyltransferase (258 aa).

It belongs to the KdsB family.

Its subcellular location is the cytoplasm. It catalyses the reaction 3-deoxy-alpha-D-manno-oct-2-ulosonate + CTP = CMP-3-deoxy-beta-D-manno-octulosonate + diphosphate. It functions in the pathway nucleotide-sugar biosynthesis; CMP-3-deoxy-D-manno-octulosonate biosynthesis; CMP-3-deoxy-D-manno-octulosonate from 3-deoxy-D-manno-octulosonate and CTP: step 1/1. It participates in bacterial outer membrane biogenesis; lipopolysaccharide biosynthesis. Activates KDO (a required 8-carbon sugar) for incorporation into bacterial lipopolysaccharide in Gram-negative bacteria. The polypeptide is 3-deoxy-manno-octulosonate cytidylyltransferase (Pasteurella multocida (strain Pm70)).